The following is a 502-amino-acid chain: Serine/threonine-protein kinase SKS1 (502 aa).

The region spanning 10-338 (FRITAQIGSG…SEVSSLTSFT (329 aa)) is the Protein kinase domain. ATP is bound by residues 16-24 (IGSGAYGLV) and Lys-39. The Proton acceptor role is filled by Asp-186. 2 stretches are compositionally biased toward low complexity: residues 376 to 391 (QEQQQQQQQQQQQVQE) and 399 to 410 (EQIQNQEQAQQQ). A disordered region spans residues 376 to 439 (QEQQQQQQQQ…GSMEKYEYTN (64 aa)). Over residues 411 to 420 (QEEEDAEPES) the composition is skewed to acidic residues.

The protein belongs to the protein kinase superfamily. Ser/Thr protein kinase family.

The enzyme catalyses L-seryl-[protein] + ATP = O-phospho-L-seryl-[protein] + ADP + H(+). The catalysed reaction is L-threonyl-[protein] + ATP = O-phospho-L-threonyl-[protein] + ADP + H(+). May have a role in glucose regulation. In Saccharomyces cerevisiae (strain ATCC 204508 / S288c) (Baker's yeast), this protein is Serine/threonine-protein kinase SKS1 (SKS1).